The following is a 97-amino-acid chain: Co-chaperonin GroES (97 aa).

The protein belongs to the GroES chaperonin family. Heptamer of 7 subunits arranged in a ring. Interacts with the chaperonin GroEL.

Its subcellular location is the cytoplasm. Together with the chaperonin GroEL, plays an essential role in assisting protein folding. The GroEL-GroES system forms a nano-cage that allows encapsulation of the non-native substrate proteins and provides a physical environment optimized to promote and accelerate protein folding. GroES binds to the apical surface of the GroEL ring, thereby capping the opening of the GroEL channel. The chain is Co-chaperonin GroES from Pectobacterium atrosepticum (strain SCRI 1043 / ATCC BAA-672) (Erwinia carotovora subsp. atroseptica).